The following is a 400-amino-acid chain: Enoyl-[acyl-carrier-protein] reductase [NADH] (400 aa).

Residues 48 to 53 (GSSSGY), 74 to 75 (FE), 111 to 112 (DA), and 139 to 140 (LA) contribute to the NAD(+) site. Residue Tyr-225 coordinates substrate. The active-site Proton donor is the Tyr-235. NAD(+) is bound by residues Lys-244 and 273-275 (VVT).

It belongs to the TER reductase family. Monomer.

The catalysed reaction is a 2,3-saturated acyl-[ACP] + NAD(+) = a (2E)-enoyl-[ACP] + NADH + H(+). Its pathway is lipid metabolism; fatty acid biosynthesis. Involved in the final reduction of the elongation cycle of fatty acid synthesis (FAS II). Catalyzes the reduction of a carbon-carbon double bond in an enoyl moiety that is covalently linked to an acyl carrier protein (ACP). In Shewanella loihica (strain ATCC BAA-1088 / PV-4), this protein is Enoyl-[acyl-carrier-protein] reductase [NADH].